A 103-amino-acid polypeptide reads, in one-letter code: Translation initiation factor 1A (103 aa).

The 76-residue stretch at 11–86 (TRVRTPRENE…EKCDVIWRYT (76 aa)) folds into the S1-like domain.

The protein belongs to the eIF-1A family.

Its function is as follows. Seems to be required for maximal rate of protein biosynthesis. Enhances ribosome dissociation into subunits and stabilizes the binding of the initiator Met-tRNA(I) to 40 S ribosomal subunits. The protein is Translation initiation factor 1A (eIF1A) of Methanococcus maripaludis (strain C5 / ATCC BAA-1333).